Consider the following 470-residue polypeptide: MKINSPLEAYKYLPQTNCGECGQPTCMAFASTLIDRSGKTTDCPPLIKEKKFAKKLAELDRLLAPEIRQVTIGVGERAANIGGDDVLYRHKLTFFNKTKMFFDVADNMDEAAIVERVKKISDYKKFYVGRNLLLDGVAIRAASNDPAKFATAVKKVIENTELPVILCSFNPAVLKAGLEVAKGKNPLLYAANKDNWKEVGELALEYNVPVVVSAFNDLDGLKTLAKTFAEAGIKDIVLDPGTYPTGKGLKDTFTNFLKIRRAGIMGDTEIAYPIMAMPLTAWMAGIADPVSASYWETVLASIFTIRYGDIMLLHSMEPYATMPEVHLAETIYTDPRSPVAVDSKMYKVGNPTADSPVLFTTNFALTYYTVESDLASNGIDCWLLAVNTDGIGVEAAAAGGQLTADKVKDAFEKSGFDLKSDVTHNSVVIPGLAARLQGDIEDKLNVKVMVGPMDSGRLPGWMEKNWPPKK.

A 4Fe-4S domain is found at 1–60 (MKINSPLEAYKYLPQTNCGECGQPTCMAFASTLIDRSGKTTDCPPLIKEKKFAKKLAELD). Cysteine 18, cysteine 21, cysteine 26, and cysteine 43 together coordinate [4Fe-4S] cluster.

Heterodimer of delta and gamma chains. The ACDS complex is made up of alpha, epsilon, beta, gamma and delta chains with a probable stoichiometry of (alpha(2)epsilon(2))(4)-beta(8)-(gamma(1)delta(1))(8). It depends on corrinoid as a cofactor. Requires [4Fe-4S] cluster as cofactor.

It carries out the reaction 5,6,7,8-tetrahydrosarcinapterin + methyl-Co(III)-[corrinoid Fe-S protein] = 5-methyltetrahydrosarcinapterin + Co(I)-[corrinoid Fe-S protein] + H(+). It functions in the pathway one-carbon metabolism; methanogenesis from acetate. Its function is as follows. Part of a complex that catalyzes the reversible cleavage of acetyl-CoA, allowing growth on acetate as sole source of carbon and energy. The protein is Acetyl-CoA decarbonylase/synthase complex subunit gamma 1 of Methanosarcina mazei (strain ATCC BAA-159 / DSM 3647 / Goe1 / Go1 / JCM 11833 / OCM 88) (Methanosarcina frisia).